A 201-amino-acid chain; its full sequence is Probable nicotinate-nucleotide adenylyltransferase (201 aa).

This sequence belongs to the NadD family.

The enzyme catalyses nicotinate beta-D-ribonucleotide + ATP + H(+) = deamido-NAD(+) + diphosphate. Its pathway is cofactor biosynthesis; NAD(+) biosynthesis; deamido-NAD(+) from nicotinate D-ribonucleotide: step 1/1. Catalyzes the reversible adenylation of nicotinate mononucleotide (NaMN) to nicotinic acid adenine dinucleotide (NaAD). In Bacteroides fragilis (strain YCH46), this protein is Probable nicotinate-nucleotide adenylyltransferase.